Here is a 462-residue protein sequence, read N- to C-terminus: UDP-N-acetylmuramate--L-alanine ligase (462 aa).

112–118 (GTHGKTT) contacts ATP.

The protein belongs to the MurCDEF family.

It is found in the cytoplasm. The catalysed reaction is UDP-N-acetyl-alpha-D-muramate + L-alanine + ATP = UDP-N-acetyl-alpha-D-muramoyl-L-alanine + ADP + phosphate + H(+). It participates in cell wall biogenesis; peptidoglycan biosynthesis. In terms of biological role, cell wall formation. This chain is UDP-N-acetylmuramate--L-alanine ligase, found in Geobacter sulfurreducens (strain ATCC 51573 / DSM 12127 / PCA).